A 496-amino-acid chain; its full sequence is Cobyric acid synthase (496 aa).

Residues 257-447 (KINVAIILLK…MHGILDNPAV (191 aa)) form the GATase cobBQ-type domain. The Nucleophile role is filled by C338. The active site involves H439.

The protein belongs to the CobB/CobQ family. CobQ subfamily.

Its pathway is cofactor biosynthesis; adenosylcobalamin biosynthesis. Catalyzes amidations at positions B, D, E, and G on adenosylcobyrinic A,C-diamide. NH(2) groups are provided by glutamine, and one molecule of ATP is hydrogenolyzed for each amidation. This chain is Cobyric acid synthase, found in Parabacteroides distasonis (strain ATCC 8503 / DSM 20701 / CIP 104284 / JCM 5825 / NCTC 11152).